Consider the following 721-residue polypeptide: Leucine-rich repeat flightless-interacting protein 2 (721 aa).

A DVL3-binding region spans residues 1-370 (MGTPASGRKR…YMQGLKELKE (370 aa)). S18 carries the phosphoserine modification. The stretch at 22–49 (EALSNIAREAEARLAAKRAARAEARDIR) forms a coiled coil. Phosphoserine occurs at positions 96, 101, 168, 173, 190, and 202. 2 disordered regions span residues 232 to 262 (SARSSPGFTNDDTASIVSSDRASRGRRESVV) and 295 to 338 (KSDK…IDPD). 2 stretches are compositionally biased toward polar residues: residues 237–251 (PGFTNDDTASIVSSD) and 305–338 (TRPSSRNSASATTPLSGNSSRRGSGDTSSLIDPD). Phosphoserine is present on residues S309, S312, S320, S324, and S328. T331 carries the phosphothreonine modification. Residues S332 and S333 each carry the phosphoserine modification. 2 coiled-coil regions span residues 349–524 (DLKD…GEKH) and 566–714 (LDVR…KANR).

It belongs to the LRRFIP family. As to quaternary structure, interacts (via N-terminus) with DVL3. Interacts with FLII. Weakly interacts with MYD88 in resting cells. Following LPS-stimulation, the interaction with MYD88 is rapidly enhanced; the complex gradually dissociates to basal levels after 6 hours of stimulation. Interaction with MYD88 is regulated by LPS-induced phosphorylation at Ser-202. In the presence of LPS, competes with FLII for MYD88-binding. In terms of processing, ser-190 and Ser-202 are phosphorylated in response to LPS stimulation. Ser-202 phosphorylation regulates the LPS-induced interaction with MYD88. Widely expressed, with highest levels in heart and skeletal muscle.

May function as activator of the canonical Wnt signaling pathway, in association with DVL3, upstream of CTNNB1/beta-catenin. Positively regulates Toll-like receptor (TLR) signaling in response to agonist probably by competing with the negative FLII regulator for MYD88-binding. This is Leucine-rich repeat flightless-interacting protein 2 (LRRFIP2) from Homo sapiens (Human).